Reading from the N-terminus, the 221-residue chain is Ribosomal RNA small subunit methyltransferase Nep1 (221 aa).

Residues G174, G179, and 196-201 (IGNVSL) contribute to the S-adenosyl-L-methionine site.

Belongs to the class IV-like SAM-binding methyltransferase superfamily. RNA methyltransferase NEP1 family. As to quaternary structure, homodimer.

The enzyme catalyses a pseudouridine in rRNA + S-adenosyl-L-methionine = an N(1)-methylpseudouridine in rRNA + S-adenosyl-L-homocysteine + H(+). Functionally, methyltransferase involved in ribosomal biogenesis. Specifically catalyzes the N1-methylation of the pseudouridine corresponding to position 914 in M.jannaschii 16S rRNA. This is Ribosomal RNA small subunit methyltransferase Nep1 from Pyrobaculum calidifontis (strain DSM 21063 / JCM 11548 / VA1).